Reading from the N-terminus, the 311-residue chain is Pyrimidine-specific ribonucleoside hydrolase RihA (311 aa).

Residue H240 is part of the active site.

This sequence belongs to the IUNH family. RihA subfamily.

Functionally, hydrolyzes with equal efficiency cytidine or uridine to ribose and cytosine or uracil, respectively. In Escherichia coli O7:K1 (strain IAI39 / ExPEC), this protein is Pyrimidine-specific ribonucleoside hydrolase RihA.